We begin with the raw amino-acid sequence, 858 residues long: Zinc finger protein ZXDC (858 aa).

Disordered regions lie at residues 1–73 (MDLP…GGDS), 85–108 (DTHG…PAAA), and 142–175 (AAPS…GSPA). Residues 59–68 (APGPSPPPPE) are compositionally biased toward pro residues. The segment covering 142-152 (AAPSLHPATTP) has biased composition (low complexity). 10 C2H2-type zinc fingers span residues 176–200 (YRCP…LLTH), 209–233 (FKCP…LQSH), 239–263 (FSCP…MKGH), 269–291 (FKCE…QRSH), 298–322 (YKCD…NRAH), 329–353 (FSCS…LRSH), 359–383 (FICD…KRKH), 389–413 (FTCP…SITH), 419–443 (FECP…SKKH), and 452–477 (SRCP…VRQH). Positions 624–634 (DSPALTPSNNL) are enriched in polar residues. The tract at residues 624 to 652 (DSPALTPSNNLTAPGTTPTSSDTTQETGS) is disordered. The span at 635–651 (TAPGTTPTSSDTTQETG) shows a compositional bias: low complexity. Residue lysine 661 forms a Glycyl lysine isopeptide (Lys-Gly) (interchain with G-Cter in SUMO) linkage. 2 disordered regions span residues 671–714 (DVVQ…LESG) and 727–751 (VKKK…KVKG). Positions 681-692 (GPSQSVLSSSTE) are enriched in polar residues.

Belongs to the ZXD family. As to quaternary structure, self-associates. Interacts with ZXDB and CIITA. Post-translationally, sumoylated at Lys-661 with SUMO1, SUMO2 and SUMO3; sumoylation enhances the activity of the transcriptional activation domain.

Its subcellular location is the nucleus. Cooperates with CIITA to promote transcription of MHC class I and MHC class II genes. This is Zinc finger protein ZXDC (Zxdc) from Mus musculus (Mouse).